The primary structure comprises 620 residues: 1-deoxy-D-xylulose-5-phosphate synthase (620 aa).

Thiamine diphosphate-binding positions include H75 and 116 to 118; that span reads AHS. D147 serves as a coordination point for Mg(2+). Residues 148–149, N177, Y284, and E366 each bind thiamine diphosphate; that span reads GA. N177 is a binding site for Mg(2+).

The protein belongs to the transketolase family. DXPS subfamily. Homodimer. The cofactor is Mg(2+). It depends on thiamine diphosphate as a cofactor.

The enzyme catalyses D-glyceraldehyde 3-phosphate + pyruvate + H(+) = 1-deoxy-D-xylulose 5-phosphate + CO2. It functions in the pathway metabolic intermediate biosynthesis; 1-deoxy-D-xylulose 5-phosphate biosynthesis; 1-deoxy-D-xylulose 5-phosphate from D-glyceraldehyde 3-phosphate and pyruvate: step 1/1. In terms of biological role, catalyzes the acyloin condensation reaction between C atoms 2 and 3 of pyruvate and glyceraldehyde 3-phosphate to yield 1-deoxy-D-xylulose-5-phosphate (DXP). This is 1-deoxy-D-xylulose-5-phosphate synthase from Bordetella pertussis (strain Tohama I / ATCC BAA-589 / NCTC 13251).